A 176-amino-acid polypeptide reads, in one-letter code: MTNIRKSHPLLKIINDSFIDLPTPSNISSWWNFGSLLGICLVLQISTGLFLAMHYTSDTATAFNSVTHISRDVNYGWVLRYLHANGASMFFICLYLHVGRGLYYGSYLYKETWNVGVILLFATMATAFMGYVLPWGQMSFWGATVITNLLSAIPYIGTDLVEWIWGGFSVDKATLT.

The next 3 membrane-spanning stretches (helical) occupy residues 33–53, 77–98, and 113–133; these read FGSLLGICLVLQISTGLFLAM, WVLRYLHANGASMFFICLYLHV, and WNVGVILLFATMATAFMGYVL. 2 residues coordinate heme b: His83 and His97.

This sequence belongs to the cytochrome b family. In terms of assembly, the cytochrome bc1 complex contains 11 subunits: 3 respiratory subunits (MT-CYB, CYC1 and UQCRFS1), 2 core proteins (UQCRC1 and UQCRC2) and 6 low-molecular weight proteins (UQCRH/QCR6, UQCRB/QCR7, UQCRQ/QCR8, UQCR10/QCR9, UQCR11/QCR10 and a cleavage product of UQCRFS1). This cytochrome bc1 complex then forms a dimer. It depends on heme b as a cofactor.

The protein resides in the mitochondrion inner membrane. Component of the ubiquinol-cytochrome c reductase complex (complex III or cytochrome b-c1 complex) that is part of the mitochondrial respiratory chain. The b-c1 complex mediates electron transfer from ubiquinol to cytochrome c. Contributes to the generation of a proton gradient across the mitochondrial membrane that is then used for ATP synthesis. This is Cytochrome b (MT-CYB) from Corynorhinus rafinesquii (Rafinesque's big-eared bat).